A 553-amino-acid chain; its full sequence is Transcriptional regulator HilA (553 aa).

The segment at residues asparagine 11–arginine 107 is a DNA-binding region (ompR/PhoB-type). A 4-aspartylphosphate modification is found at aspartate 62. The stretch at alanine 372–arginine 405 is one TPR repeat.

Functionally, the main transcriptional regulator of the Salmonella pathogenicity island 1 (SPI1) gene expression. Activates the expression of invasion genes by a direct action at their promoters and also indirectly by increasing the level of InvF. Also binds upstream of prgH and directly activates the expression of prgHIJK operon. This Salmonella typhimurium (strain LT2 / SGSC1412 / ATCC 700720) protein is Transcriptional regulator HilA (hilA).